We begin with the raw amino-acid sequence, 1447 residues long: Sister chromatid cohesion protein PDS5 homolog B (1447 aa).

Residues 383 to 419 form an HEAT repeat; that stretch reads LLVNDHLLNFVRERTLDKRWRVRKEAMMGLAQIYKKY. The interval 1117–1447 is disordered; that stretch reads KSFFTPGKPK…RRRSAKRERR (331 aa). K1136 bears the N6-acetyllysine mark. Polar residues predominate over residues 1137-1155; the sequence is PLSSAGKQSQTKSSRMETV. A phosphoserine mark is found at S1140, S1162, S1166, S1176, S1182, and S1191. Low complexity predominate over residues 1156–1167; the sequence is SNASSSSNPSSP. Residues 1172-1184 show a composition bias toward basic and acidic residues; sequence GRLDSSEMDHSEN. Composition is skewed to basic and acidic residues over residues 1196 to 1214 and 1225 to 1243; these read KKSD…LEKP and QEEK…EQKP. Basic residues predominate over residues 1245-1254; it reads GSQRSRKRGH. Positions 1249–1261 form a DNA-binding region, a.T hook 1; sequence SRKRGHTASESDE. T1255 carries the phosphothreonine modification. Phosphoserine is present on residues S1257 and S1259. The span at 1265-1274 shows a compositional bias: basic and acidic residues; it reads PEEKRLKEDI. Residue S1283 is modified to Phosphoserine. Positions 1287–1299 form a DNA-binding region, a.T hook 2; the sequence is KGKRGRPPKPLGG. Over residues 1310–1319 the composition is skewed to basic residues; sequence TSKKGSKKKS. A phosphoserine mark is found at S1319 and S1334. Residues 1342-1353 are compositionally biased toward basic residues; that stretch reads KSKQHRVSRRAQ. A compositionally biased stretch (polar residues) spans 1355–1372; the sequence is RAESPESSAIESTQSTPQ. Phosphoserine occurs at positions 1358 and 1366. T1367 is subject to Phosphothreonine. S1369 bears the Phosphoserine mark. Residues T1370 and T1381 each carry the phosphothreonine modification. The a.T hook 3 DNA-binding region spans 1372–1384; that stretch reads QKGRGRPSKTPSP. A compositionally biased stretch (low complexity) spans 1379–1388; it reads SKTPSPSQPK. Phosphoserine is present on residues S1383 and S1417. The span at 1422–1432 shows a compositional bias: acidic residues; that stretch reads IPQEETEEEEV. A compositionally biased stretch (basic residues) spans 1437 to 1447; the sequence is VRRRSAKRERR.

This sequence belongs to the PDS5 family. In terms of assembly, interacts with the cohesin complex. Interacts with RAD21; the interaction is direct. Interacts with WAPL (via FGF motifs) or CDCA5 (via the FGF motif); the interaction is direct, cohesin-dependent and competitive. As to expression, widely expressed.

Its subcellular location is the nucleus. In terms of biological role, regulator of sister chromatid cohesion in mitosis which may stabilize cohesin complex association with chromatin. May couple sister chromatid cohesion during mitosis to DNA replication. Cohesion ensures that chromosome partitioning is accurate in both meiotic and mitotic cells and plays an important role in DNA repair. Plays a role in androgen-induced proliferative arrest in prostate cells. The protein is Sister chromatid cohesion protein PDS5 homolog B (PDS5B) of Homo sapiens (Human).